A 252-amino-acid polypeptide reads, in one-letter code: MSSSAHLQDAPPLLSGTLTQNEGQTSLRQSSSCGPSAASASESLSGYTESRIPHSKVRQGKGLRSIFPESRVKRYCCYGGVITVVAIAIVVPLSVTLSVKQMEQTSINNTSAASINNTSAASINNTSAACPSNWTEYGNKCFYFSEYTSNWTFSKDFCAAQGAELARFDTEEELNFLKRYKGSSGYWIGLHRESSEHPWKWTDNTQYNNLIPIRGDGQCGFLSDQLNISSSRVYVERPWICSKPKKYISQSQ.

Positions 1 to 58 are disordered; it reads MSSSAHLQDAPPLLSGTLTQNEGQTSLRQSSSCGPSAASASESLSGYTESRIPHSKVR. Residues 1-78 are Cytoplasmic-facing; that stretch reads MSSSAHLQDA…ESRVKRYCCY (78 aa). Over residues 16–29 the composition is skewed to polar residues; that stretch reads GTLTQNEGQTSLRQ. The segment covering 30-43 has biased composition (low complexity); it reads SSSCGPSAASASES. Residues 79–99 traverse the membrane as a helical; Signal-anchor for type II membrane protein segment; sequence GGVITVVAIAIVVPLSVTLSV. The Extracellular segment spans residues 100–252; it reads KQMEQTSINN…KPKKYISQSQ (153 aa). The 106-residue stretch at 137–242 folds into the C-type lectin domain; it reads YGNKCFYFSE…VYVERPWICS (106 aa). The N-linked (GlcNAc...) asparagine glycan is linked to asparagine 150. A disulfide bond links cysteine 158 and cysteine 241.

Its subcellular location is the cell membrane. In terms of biological role, lectin-type cell surface receptor. In Rattus norvegicus (Rat), this protein is C-type lectin domain family 2 member D3 (Clec2d3).